A 167-amino-acid polypeptide reads, in one-letter code: CS6 fimbrial subunit B (167 aa).

A signal peptide spans 1 to 21 (MLKKIISAIALIAGTSGVVNA).

It localises to the fimbrium. This chain is CS6 fimbrial subunit B (cssB), found in Escherichia coli.